The primary structure comprises 152 residues: D-aminoacyl-tRNA deacylase (152 aa).

A Gly-cisPro motif, important for rejection of L-amino acids motif is present at residues 142–143; the sequence is GP.

This sequence belongs to the DTD family. Homodimer.

Its subcellular location is the cytoplasm. The enzyme catalyses glycyl-tRNA(Ala) + H2O = tRNA(Ala) + glycine + H(+). The catalysed reaction is a D-aminoacyl-tRNA + H2O = a tRNA + a D-alpha-amino acid + H(+). In terms of biological role, an aminoacyl-tRNA editing enzyme that deacylates mischarged D-aminoacyl-tRNAs. Also deacylates mischarged glycyl-tRNA(Ala), protecting cells against glycine mischarging by AlaRS. Acts via tRNA-based rather than protein-based catalysis; rejects L-amino acids rather than detecting D-amino acids in the active site. By recycling D-aminoacyl-tRNA to D-amino acids and free tRNA molecules, this enzyme counteracts the toxicity associated with the formation of D-aminoacyl-tRNA entities in vivo and helps enforce protein L-homochirality. This chain is D-aminoacyl-tRNA deacylase, found in Burkholderia ambifaria (strain ATCC BAA-244 / DSM 16087 / CCUG 44356 / LMG 19182 / AMMD) (Burkholderia cepacia (strain AMMD)).